A 693-amino-acid chain; its full sequence is DNA ligase (693 aa).

NAD(+) is bound by residues 40–44 (DSEYD), 89–90 (SL), and glutamate 121. Lysine 123 functions as the N6-AMP-lysine intermediate in the catalytic mechanism. Positions 144, 179, 295, and 319 each coordinate NAD(+). Zn(2+)-binding residues include cysteine 413, cysteine 416, cysteine 431, and cysteine 437. A BRCT domain is found at 610–693 (REQNILTGKI…AFIKCLEKEV (84 aa)).

The protein belongs to the NAD-dependent DNA ligase family. LigA subfamily. Requires Mg(2+) as cofactor. Mn(2+) is required as a cofactor.

It carries out the reaction NAD(+) + (deoxyribonucleotide)n-3'-hydroxyl + 5'-phospho-(deoxyribonucleotide)m = (deoxyribonucleotide)n+m + AMP + beta-nicotinamide D-nucleotide.. In terms of biological role, DNA ligase that catalyzes the formation of phosphodiester linkages between 5'-phosphoryl and 3'-hydroxyl groups in double-stranded DNA using NAD as a coenzyme and as the energy source for the reaction. It is essential for DNA replication and repair of damaged DNA. The chain is DNA ligase from Rickettsia typhi (strain ATCC VR-144 / Wilmington).